Reading from the N-terminus, the 130-residue chain is Small ribosomal subunit protein eS8 (130 aa).

The protein belongs to the eukaryotic ribosomal protein eS8 family. As to quaternary structure, part of the 30S ribosomal subunit.

The polypeptide is Small ribosomal subunit protein eS8 (Thermococcus gammatolerans (strain DSM 15229 / JCM 11827 / EJ3)).